A 233-amino-acid chain; its full sequence is Transcriptional regulatory protein PrrA (233 aa).

One can recognise a Response regulatory domain in the interval arginine 9–leucine 123. A 4-aspartylphosphate modification is found at aspartate 58. The segment at residues serine 134 to methionine 232 is a DNA-binding region (ompR/PhoB-type).

In terms of processing, phosphorylated by PrrB at Asp-58.

The protein localises to the cytoplasm. Its function is as follows. Member of the two-component regulatory system PrrB/PrrA that is involved specifically in early intracellular multiplication of Mycobacterium and is essential for its viability. Upon phosphorylation by PrrB, functions as a transcription regulator by direct binding to promoter regions of target genes to positively regulate their expression. Autoregulates its own expression. This is Transcriptional regulatory protein PrrA (prrA) from Mycobacterium bovis (strain ATCC BAA-935 / AF2122/97).